The chain runs to 133 residues: Small ribosomal subunit protein uS8 (133 aa).

This sequence belongs to the universal ribosomal protein uS8 family. As to quaternary structure, part of the 30S ribosomal subunit. Contacts proteins S5 and S12.

In terms of biological role, one of the primary rRNA binding proteins, it binds directly to 16S rRNA central domain where it helps coordinate assembly of the platform of the 30S subunit. The polypeptide is Small ribosomal subunit protein uS8 (Trichormus variabilis (strain ATCC 29413 / PCC 7937) (Anabaena variabilis)).